Here is a 568-residue protein sequence, read N- to C-terminus: MARVEL domain-containing protein 2 (568 aa).

Disordered stretches follow at residues 1 to 72 and 116 to 163; these read MSGG…YPSD and SGGV…SYNS. The Cytoplasmic portion of the chain corresponds to 1–211; the sequence is MSGGGSSSGP…YMKSWAGLLR (211 aa). Basic and acidic residues predominate over residues 29–46; it reads ADPRHPETNLETLHDRDL. Positions 52 to 62 are enriched in pro residues; that stretch reads PLPPPPLPLHP. The MARVEL domain maps to 205-379; sequence SWAGLLRILC…SAMVSLKLWR (175 aa). The chain crosses the membrane as a helical span at residues 212–232; that stretch reads ILCIVELLLGAAVFACVTAYI. Residues 233 to 266 lie on the Extracellular side of the membrane; the sequence is HKDNEWYNMFGYSQPYGYTASMQGGYYYSGPKTP. A helical membrane pass occupies residues 267-287; it reads FVLVVAGLAWIVTIILLVLGM. Residues 288-303 are Cytoplasmic-facing; it reads SMYYRTILLDSTWWPL. A helical membrane pass occupies residues 304-324; that stretch reads TEFGINISLFILYMAGAIVYV. At 325–354 the chain is on the extracellular side; sequence NDTNRGGLCYYQLFNTPVNASFCRVEGGQT. The chain crosses the membrane as a helical span at residues 355 to 375; it reads AAIIFLFVSMLMYFISAMVSL. Topologically, residues 376–568 are cytoplasmic; that stretch reads KLWRHESARK…KVMDWNDGYN (193 aa). The OCEL domain maps to 451–562; it reads PDYVAKYQAI…RIQEYDKVMD (112 aa). Residues 462–559 adopt a coiled-coil conformation; the sequence is AEDERERYKA…IKQRIQEYDK (98 aa).

This sequence belongs to the ELL/occludin family.

The protein resides in the cell membrane. It localises to the cell junction. Its subcellular location is the tight junction. In terms of biological role, may play a role in the formation of the epithelial barrier. The polypeptide is MARVEL domain-containing protein 2 (marveld2) (Xenopus tropicalis (Western clawed frog)).